The following is a 429-amino-acid chain: D-amino acid dehydrogenase (429 aa).

3–17 (VLILGSGVIGTTTAW) contributes to the FAD binding site.

It belongs to the DadA oxidoreductase family. It depends on FAD as a cofactor.

The catalysed reaction is a D-alpha-amino acid + A + H2O = a 2-oxocarboxylate + AH2 + NH4(+). Its pathway is amino-acid degradation; D-alanine degradation; NH(3) and pyruvate from D-alanine: step 1/1. Its function is as follows. Oxidative deamination of D-amino acids. This Xanthomonas campestris pv. campestris (strain B100) protein is D-amino acid dehydrogenase.